A 465-amino-acid polypeptide reads, in one-letter code: Ribulose bisphosphate carboxylase large chain (465 aa).

Lysine 4 is modified (N6,N6,N6-trimethyllysine). Substrate-binding residues include asparagine 113 and threonine 163. Catalysis depends on lysine 165, which acts as the Proton acceptor. Position 167 (lysine 167) interacts with substrate. Mg(2+) is bound by residues lysine 191, aspartate 193, and glutamate 194. The residue at position 191 (lysine 191) is an N6-carboxylysine. Histidine 284 functions as the Proton acceptor in the catalytic mechanism. Residues arginine 285, histidine 317, and serine 369 each coordinate substrate.

It belongs to the RuBisCO large chain family. Type I subfamily. Heterohexadecamer of 8 large chains and 8 small chains; disulfide-linked. The disulfide link is formed within the large subunit homodimers. Requires Mg(2+) as cofactor. In terms of processing, the disulfide bond which can form in the large chain dimeric partners within the hexadecamer appears to be associated with oxidative stress and protein turnover.

It is found in the plastid. The protein localises to the chloroplast. It carries out the reaction 2 (2R)-3-phosphoglycerate + 2 H(+) = D-ribulose 1,5-bisphosphate + CO2 + H2O. The enzyme catalyses D-ribulose 1,5-bisphosphate + O2 = 2-phosphoglycolate + (2R)-3-phosphoglycerate + 2 H(+). In terms of biological role, ruBisCO catalyzes two reactions: the carboxylation of D-ribulose 1,5-bisphosphate, the primary event in carbon dioxide fixation, as well as the oxidative fragmentation of the pentose substrate in the photorespiration process. Both reactions occur simultaneously and in competition at the same active site. This is Ribulose bisphosphate carboxylase large chain from Passiflora quadrangularis (Grenadine).